Reading from the N-terminus, the 213-residue chain is Large ribosomal subunit protein uL3 (213 aa).

The segment at 130–161 (KRGNMTHGSKNHRLPGSTGAGTTPGRVYPGKR) is disordered.

It belongs to the universal ribosomal protein uL3 family. Part of the 50S ribosomal subunit. Forms a cluster with proteins L14 and L19.

In terms of biological role, one of the primary rRNA binding proteins, it binds directly near the 3'-end of the 23S rRNA, where it nucleates assembly of the 50S subunit. The sequence is that of Large ribosomal subunit protein uL3 from Picosynechococcus sp. (strain ATCC 27264 / PCC 7002 / PR-6) (Agmenellum quadruplicatum).